Here is a 500-residue protein sequence, read N- to C-terminus: Prostacyclin synthase (500 aa).

Residues 1 to 20 (MAWAALLGLLAALLLLLLLS) form a helical membrane-spanning segment. Residues arginine 106, leucine 112, asparagine 287, 358–359 (TR), and arginine 382 each bind substrate. Position 441 (cysteine 441) interacts with heme.

Belongs to the cytochrome P450 family. Heme is required as a cofactor. Widely expressed; particularly abundant in ovary, heart, skeletal muscle, lung and prostate.

The protein localises to the endoplasmic reticulum membrane. The catalysed reaction is prostaglandin H2 = prostaglandin I2. It catalyses the reaction a hydroperoxyeicosatetraenoate = an oxoeicosatetraenoate + H2O. The enzyme catalyses (15S)-hydroperoxy-(5Z,8Z,11Z,13E)-eicosatetraenoate = 15-oxo-(5Z,8Z,11Z,13E)-eicosatetraenoate + H2O. It carries out the reaction (15S)-hydroperoxy-(5Z,8Z,11Z,13E)-eicosatetraenoate + AH2 = (15S)-hydroxy-(5Z,8Z,11Z,13E)-eicosatetraenoate + A + H2O. Functionally, catalyzes the biosynthesis and metabolism of eicosanoids. Catalyzes the isomerization of prostaglandin H2 to prostacyclin (= prostaglandin I2), a potent mediator of vasodilation and inhibitor of platelet aggregation. Additionally, displays dehydratase activity, toward hydroperoxyeicosatetraenoates (HPETEs), especially toward (15S)-hydroperoxy-(5Z,8Z,11Z,13E)-eicosatetraenoate (15(S)-HPETE). The chain is Prostacyclin synthase (PTGIS) from Homo sapiens (Human).